The chain runs to 474 residues: Bifunctional protein HldE (474 aa).

The interval 1–321 (MILSSSLRPT…EYLHSSHQGE (321 aa)) is ribokinase. An ATP-binding site is contributed by 198-201 (NKKE). D266 is an active-site residue. Positions 348-474 (FTNGCFDILH…SAVVKKIQGS (127 aa)) are cytidylyltransferase.

This sequence in the N-terminal section; belongs to the carbohydrate kinase PfkB family. It in the C-terminal section; belongs to the cytidylyltransferase family. As to quaternary structure, homodimer.

The catalysed reaction is D-glycero-beta-D-manno-heptose 7-phosphate + ATP = D-glycero-beta-D-manno-heptose 1,7-bisphosphate + ADP + H(+). The enzyme catalyses D-glycero-beta-D-manno-heptose 1-phosphate + ATP + H(+) = ADP-D-glycero-beta-D-manno-heptose + diphosphate. The protein operates within nucleotide-sugar biosynthesis; ADP-L-glycero-beta-D-manno-heptose biosynthesis; ADP-L-glycero-beta-D-manno-heptose from D-glycero-beta-D-manno-heptose 7-phosphate: step 1/4. Its pathway is nucleotide-sugar biosynthesis; ADP-L-glycero-beta-D-manno-heptose biosynthesis; ADP-L-glycero-beta-D-manno-heptose from D-glycero-beta-D-manno-heptose 7-phosphate: step 3/4. Its function is as follows. Catalyzes the phosphorylation of D-glycero-D-manno-heptose 7-phosphate at the C-1 position to selectively form D-glycero-beta-D-manno-heptose-1,7-bisphosphate. Catalyzes the ADP transfer from ATP to D-glycero-beta-D-manno-heptose 1-phosphate, yielding ADP-D-glycero-beta-D-manno-heptose. In Wolinella succinogenes (strain ATCC 29543 / DSM 1740 / CCUG 13145 / JCM 31913 / LMG 7466 / NCTC 11488 / FDC 602W) (Vibrio succinogenes), this protein is Bifunctional protein HldE.